The sequence spans 123 residues: Thioredoxin domain-containing protein 17 (123 aa).

Ala-2 bears the N-acetylalanine mark. The Thioredoxin domain occupies 41–123 (SWCPDCVQAE…NLVEMLFSED (83 aa)). Catalysis depends on nucleophile residues Cys-43 and Cys-46. Cysteines 43 and 46 form a disulfide.

This sequence belongs to the thioredoxin family. In terms of assembly, interacts with TRXR1 and DYNLL1/DNCL1. In terms of processing, the oxidized protein is reduced by TRXR1. Ubiquitously expressed in cell lines.

Its subcellular location is the cytoplasm. Functionally, disulfide reductase. May participate in various redox reactions through the reversible oxidation of its active center dithiol to a disulfide and catalyze dithiol-disulfide exchange reactions. Modulates TNF-alpha signaling and NF-kappa-B activation. Has peroxidase activity and may contribute to the elimination of cellular hydrogen peroxide. The polypeptide is Thioredoxin domain-containing protein 17 (TXNDC17) (Homo sapiens (Human)).